Here is a 95-residue protein sequence, read N- to C-terminus: Large ribosomal subunit protein bL25 (95 aa).

The protein belongs to the bacterial ribosomal protein bL25 family. As to quaternary structure, part of the 50S ribosomal subunit; part of the 5S rRNA/L5/L18/L25 subcomplex. Contacts the 5S rRNA. Binds to the 5S rRNA independently of L5 and L18.

In terms of biological role, this is one of the proteins that binds to the 5S RNA in the ribosome where it forms part of the central protuberance. This is Large ribosomal subunit protein bL25 from Actinobacillus succinogenes (strain ATCC 55618 / DSM 22257 / CCUG 43843 / 130Z).